The sequence spans 117 residues: Large ribosomal subunit protein uL18 (117 aa).

The protein belongs to the universal ribosomal protein uL18 family. In terms of assembly, part of the 50S ribosomal subunit; part of the 5S rRNA/L5/L18/L25 subcomplex. Contacts the 5S and 23S rRNAs.

In terms of biological role, this is one of the proteins that bind and probably mediate the attachment of the 5S RNA into the large ribosomal subunit, where it forms part of the central protuberance. This Blochmanniella pennsylvanica (strain BPEN) protein is Large ribosomal subunit protein uL18.